Consider the following 332-residue polypeptide: Phosphate acetyltransferase (332 aa).

This sequence belongs to the phosphate acetyltransferase and butyryltransferase family.

It localises to the cytoplasm. The catalysed reaction is acetyl-CoA + phosphate = acetyl phosphate + CoA. The protein operates within metabolic intermediate biosynthesis; acetyl-CoA biosynthesis; acetyl-CoA from acetate: step 2/2. This chain is Phosphate acetyltransferase (pta), found in Acetivibrio thermocellus (strain ATCC 27405 / DSM 1237 / JCM 9322 / NBRC 103400 / NCIMB 10682 / NRRL B-4536 / VPI 7372) (Clostridium thermocellum).